We begin with the raw amino-acid sequence, 427 residues long: MKTLTGTTEAILNELRAENSSNSSDQIASEVKAIIENVKNTGDQALFDYTAKFDGVELNELRIPNSDIQIATNKVDPAFLEALKEAKANIESFHNKQKQSAFLDSEKDGVIRGQIIRPLETVGVYVPGGTAAYPSSVLMNVLPAKIAGVKRIVMITPPSENGINPHVLAAANLAGVDEIYQVGGAHGIAALAYGTASIPKVDKIVGPGNVYVATAKREVFGLVDIDMIAGPSEIVVLADETAKPAFIAADLLSQAEHDTLARAILITTSEKIAQQTKIELNKQLENLPRKAIAKEATESHGKIIITKSTAEMFHIMNEIAPEHLEVQLENPMNYLYQIKNAGSIFLGNYASEPLGDYFAGPNHVLPTSGTAKFFSPLGVEDFTKRSAFISYTKEALAKEKDAIVLLASKEGLDAHAKAIQIRFEEEN.

3 residues coordinate substrate: S232, Q254, and H257. 2 residues coordinate Zn(2+): Q254 and H257. Residues E322 and H323 each act as proton acceptor in the active site. Substrate contacts are provided by H323, D356, E410, and H415. Zn(2+) is bound at residue D356. H415 contacts Zn(2+).

Belongs to the histidinol dehydrogenase family. The cofactor is Zn(2+).

The catalysed reaction is L-histidinol + 2 NAD(+) + H2O = L-histidine + 2 NADH + 3 H(+). It functions in the pathway amino-acid biosynthesis; L-histidine biosynthesis; L-histidine from 5-phospho-alpha-D-ribose 1-diphosphate: step 9/9. Functionally, catalyzes the sequential NAD-dependent oxidations of L-histidinol to L-histidinaldehyde and then to L-histidine. The sequence is that of Histidinol dehydrogenase from Listeria innocua serovar 6a (strain ATCC BAA-680 / CLIP 11262).